The chain runs to 324 residues: NADH-ubiquinone oxidoreductase chain 1 (324 aa).

Helical transmembrane passes span 3 to 23 (LLFM…AVAF), 73 to 93 (LLFI…WTPF), 106 to 126 (ILFI…SGWA), 151 to 171 (ALII…AFAI), 175 to 195 (FTWF…STLA), 226 to 246 (LFFL…TIIF), 255 to 275 (TLTT…FLWV), and 295 to 315 (FLPL…SLLF).

It belongs to the complex I subunit 1 family.

Its subcellular location is the mitochondrion inner membrane. The catalysed reaction is a ubiquinone + NADH + 5 H(+)(in) = a ubiquinol + NAD(+) + 4 H(+)(out). In terms of biological role, core subunit of the mitochondrial membrane respiratory chain NADH dehydrogenase (Complex I) that is believed to belong to the minimal assembly required for catalysis. Complex I functions in the transfer of electrons from NADH to the respiratory chain. The immediate electron acceptor for the enzyme is believed to be ubiquinone. The chain is NADH-ubiquinone oxidoreductase chain 1 (MT-ND1) from Aquarana catesbeiana (American bullfrog).